A 499-amino-acid chain; its full sequence is Ribose import ATP-binding protein RbsA (499 aa).

2 ABC transporter domains span residues 3 to 240 and 250 to 494; these read VEMT…VGRA and LTPG…TGGD. 35 to 42 contacts ATP; the sequence is GENGAGKS.

This sequence belongs to the ABC transporter superfamily. Ribose importer (TC 3.A.1.2.1) family. In terms of assembly, the complex is composed of an ATP-binding protein (RbsA), two transmembrane proteins (RbsC) and a solute-binding protein (RbsB).

The protein localises to the cell membrane. It carries out the reaction D-ribose(out) + ATP + H2O = D-ribose(in) + ADP + phosphate + H(+). Functionally, part of the ABC transporter complex RbsABC involved in ribose import. Responsible for energy coupling to the transport system. The protein is Ribose import ATP-binding protein RbsA of Halalkalibacterium halodurans (strain ATCC BAA-125 / DSM 18197 / FERM 7344 / JCM 9153 / C-125) (Bacillus halodurans).